Consider the following 1359-residue polypeptide: DNA-directed RNA polymerase subunit beta (1359 aa).

It belongs to the RNA polymerase beta chain family. In terms of assembly, the RNAP catalytic core consists of 2 alpha, 1 beta, 1 beta' and 1 omega subunit. When a sigma factor is associated with the core the holoenzyme is formed, which can initiate transcription.

The catalysed reaction is RNA(n) + a ribonucleoside 5'-triphosphate = RNA(n+1) + diphosphate. Functionally, DNA-dependent RNA polymerase catalyzes the transcription of DNA into RNA using the four ribonucleoside triphosphates as substrates. In Nitrosomonas eutropha (strain DSM 101675 / C91 / Nm57), this protein is DNA-directed RNA polymerase subunit beta.